A 395-amino-acid chain; its full sequence is METRTLEDWRALLEAEKTLDSGVYNKHDLLIVRGQGARVWDAEGNEYIDCVGGYGVANLGHGNPEVVEAVKRQAETLMAMPQTLPTPMRGEFYRTLTAILPPELNRVFPVNSGTEANEAALKFARAHTGRKKFVAAMRGFSGRTMGSLSVTWEPKYREPFLPLVEPVEFIPYNDVEALKRAVDEETAAVILEPVQGEGGVRPATPEFLRAAREITQEKGALLILDEIQTGMGRTGKRFAFEHFGIVPDILTLAKALGGGVPLGAAVMREEVARSMPKGGHGTTFGGNPLAMAAGVAAIRYLERTRLWERAAELGPWFMEKLRAIPSPKIREVRGMGLMVGLELKEKAAPYIARLEKEHRVLALQAGPTVIRFLPPLVIEKEDLERVVEAVRAVLA.

Pyridoxal 5'-phosphate is bound by residues Gly113–Thr114 and Phe140. Residue Arg143 coordinates substrate. A pyridoxal 5'-phosphate-binding site is contributed by Asp225 to Gln228. Lys254 carries the N6-(pyridoxal phosphate)lysine modification. Residue Thr282 coordinates substrate. Thr283 serves as a coordination point for pyridoxal 5'-phosphate.

Belongs to the class-III pyridoxal-phosphate-dependent aminotransferase family. LysJ subfamily. In terms of assembly, homodimer. The cofactor is pyridoxal 5'-phosphate.

It localises to the cytoplasm. It carries out the reaction [amino-group carrier protein]-C-terminal-gamma-(L-lysyl)-L-glutamate + 2-oxoglutarate = [amino-group carrier protein]-C-terminal-N-(1-carboxy-5-oxopentan-1-yl)-L-glutamine + L-glutamate. The protein operates within amino-acid biosynthesis; L-lysine biosynthesis via AAA pathway; L-lysine from L-alpha-aminoadipate (Thermus route): step 4/5. Functionally, catalyzes the transfer of the amino group of L-glutamate to [LysW]-aminoadipate 6-semialdehyde, generating [LysW]-gamma-L-lysine. This is [LysW]-aminoadipate semialdehyde transaminase from Thermus thermophilus (strain ATCC 27634 / DSM 579 / HB8).